The chain runs to 266 residues: Indole-3-glycerol phosphate synthase (266 aa).

This sequence belongs to the TrpC family.

It catalyses the reaction 1-(2-carboxyphenylamino)-1-deoxy-D-ribulose 5-phosphate + H(+) = (1S,2R)-1-C-(indol-3-yl)glycerol 3-phosphate + CO2 + H2O. It participates in amino-acid biosynthesis; L-tryptophan biosynthesis; L-tryptophan from chorismate: step 4/5. The polypeptide is Indole-3-glycerol phosphate synthase (Acidovorax sp. (strain JS42)).